Consider the following 311-residue polypeptide: Aspartate carbamoyltransferase catalytic subunit (311 aa).

Residues Arg-55 and Thr-56 each coordinate carbamoyl phosphate. An L-aspartate-binding site is contributed by Lys-85. Arg-106, His-135, and Gln-138 together coordinate carbamoyl phosphate. The L-aspartate site is built by Arg-168 and Arg-230. Residues Leu-268 and Pro-269 each coordinate carbamoyl phosphate.

This sequence belongs to the aspartate/ornithine carbamoyltransferase superfamily. ATCase family. As to quaternary structure, heterododecamer (2C3:3R2) of six catalytic PyrB chains organized as two trimers (C3), and six regulatory PyrI chains organized as three dimers (R2).

It carries out the reaction carbamoyl phosphate + L-aspartate = N-carbamoyl-L-aspartate + phosphate + H(+). It participates in pyrimidine metabolism; UMP biosynthesis via de novo pathway; (S)-dihydroorotate from bicarbonate: step 2/3. Its function is as follows. Catalyzes the condensation of carbamoyl phosphate and aspartate to form carbamoyl aspartate and inorganic phosphate, the committed step in the de novo pyrimidine nucleotide biosynthesis pathway. The protein is Aspartate carbamoyltransferase catalytic subunit of Yersinia pestis.